The sequence spans 444 residues: sn-glycerol-3-phosphate-binding periplasmic protein UgpB (444 aa).

An N-terminal signal peptide occupies residues Met-1–Ala-30. Sn-glycerol 3-phosphate is bound by residues Tyr-72, Glu-96, Ser-151, Ser-277, Gly-314, Tyr-353, and Arg-404.

This sequence belongs to the bacterial solute-binding protein 1 family. The complex is composed of two ATP-binding proteins (UgpC), two transmembrane proteins (UgpA and UgpE) and a solute-binding protein (UgpB).

Its subcellular location is the periplasm. In terms of biological role, part of the ABC transporter complex UgpBAEC involved in sn-glycerol-3-phosphate (G3P) import. Binds G3P. The polypeptide is sn-glycerol-3-phosphate-binding periplasmic protein UgpB (ugpB) (Pectobacterium atrosepticum (strain SCRI 1043 / ATCC BAA-672) (Erwinia carotovora subsp. atroseptica)).